We begin with the raw amino-acid sequence, 118 residues long: Large ribosomal subunit protein bL20 (118 aa).

It belongs to the bacterial ribosomal protein bL20 family.

Its function is as follows. Binds directly to 23S ribosomal RNA and is necessary for the in vitro assembly process of the 50S ribosomal subunit. It is not involved in the protein synthesizing functions of that subunit. The chain is Large ribosomal subunit protein bL20 from Salmonella arizonae (strain ATCC BAA-731 / CDC346-86 / RSK2980).